A 189-amino-acid polypeptide reads, in one-letter code: Elongation factor P 2 (189 aa).

It belongs to the elongation factor P family.

The protein resides in the cytoplasm. Its pathway is protein biosynthesis; polypeptide chain elongation. In terms of biological role, involved in peptide bond synthesis. Stimulates efficient translation and peptide-bond synthesis on native or reconstituted 70S ribosomes in vitro. Probably functions indirectly by altering the affinity of the ribosome for aminoacyl-tRNA, thus increasing their reactivity as acceptors for peptidyl transferase. This Lactobacillus acidophilus (strain ATCC 700396 / NCK56 / N2 / NCFM) protein is Elongation factor P 2.